Consider the following 487-residue polypeptide: MKWLRLQDLPTDNSFAALPAEFYTRLQPRPPAAPRLLHANAEAAALIGLDPAEFSTQAFLDVFSGHAPLPGGDTLAAVYSGHQFGVWAGQLGEVRGPAGGWELQLKGAGMTPYSRMGDGRAVLRSSVREYLASEAMHGLGIPTTRSLALVVSDDPVMRETVETAAVVTRMAPSFVRFGSFEHWSARRQPEQLRVLADYVIDRFYPECRVAGAGRLDGEHGEILGLLAAVTRRTALLMADWQAVGFCHGVMNTDNMSILGLTLDYGPYGFMDTFQLGHICNHSDSEGRYAWNRQPSVGLWNLYRLASSLHTLAPDPEALRAVLDGYEAVFTQAFHGRMAGKLGLPQFLPEDETLLDDLLQLMHQQGADFTLAFRRLGEAVRGQRQPFEDSFIDRAAAGAWYDRLAARHASDGRAAQARAAAMDEVNPLYVLRNHLAEQAIRAAARGDAGEIDILLKLLRNPYKHQPGYDAYAGLAPDWAAGLEVSCSS.

Gly92, Arg95, Lys106, Asp118, Gly119, Arg169, and Arg176 together coordinate ATP. The Proton acceptor role is filled by Asp253. Mg(2+)-binding residues include Asn254 and Asp263. Asp263 is a binding site for ATP.

The protein belongs to the SELO family. Mg(2+) serves as cofactor. The cofactor is Mn(2+).

It carries out the reaction L-seryl-[protein] + ATP = 3-O-(5'-adenylyl)-L-seryl-[protein] + diphosphate. The catalysed reaction is L-threonyl-[protein] + ATP = 3-O-(5'-adenylyl)-L-threonyl-[protein] + diphosphate. It catalyses the reaction L-tyrosyl-[protein] + ATP = O-(5'-adenylyl)-L-tyrosyl-[protein] + diphosphate. The enzyme catalyses L-histidyl-[protein] + UTP = N(tele)-(5'-uridylyl)-L-histidyl-[protein] + diphosphate. It carries out the reaction L-seryl-[protein] + UTP = O-(5'-uridylyl)-L-seryl-[protein] + diphosphate. The catalysed reaction is L-tyrosyl-[protein] + UTP = O-(5'-uridylyl)-L-tyrosyl-[protein] + diphosphate. Functionally, nucleotidyltransferase involved in the post-translational modification of proteins. It can catalyze the addition of adenosine monophosphate (AMP) or uridine monophosphate (UMP) to a protein, resulting in modifications known as AMPylation and UMPylation. The sequence is that of Protein nucleotidyltransferase YdiU from Bordetella pertussis (strain Tohama I / ATCC BAA-589 / NCTC 13251).